Here is a 301-residue protein sequence, read N- to C-terminus: Fatty acid elongase 3 (301 aa).

Transmembrane regions (helical) follow at residues 31 to 51, 64 to 84, 122 to 142, 161 to 181, 187 to 207, 219 to 239, and 257 to 277; these read VPYI…KSIM, IVWN…TVPY, ALAD…LFAL, VIFL…FAYV, GLWF…YYFV, FAPI…IVVC, and FSLH…SQLF. A HxxHH motif motif is present at residues 165–169; that stretch reads HWYHH. The active-site Nucleophile is histidine 168.

Belongs to the ELO family.

Its subcellular location is the endoplasmic reticulum membrane. The enzyme catalyses an acyl-CoA + malonyl-CoA + H(+) = a 3-oxoacyl-CoA + CO2 + CoA. Its pathway is lipid metabolism; fatty acid biosynthesis. In terms of biological role, involved in the synthesis of fatty acids. Elongates C14 fatty acids to C18. This is Fatty acid elongase 3 from Trypanosoma brucei brucei (strain 927/4 GUTat10.1).